The chain runs to 2731 residues: Teneurin-m (2731 aa).

Disordered stretches follow at residues methionine 1–glutamine 60 and leucine 103–asparagine 136. The Cytoplasmic portion of the chain corresponds to methionine 1 to serine 229. Pro residues predominate over residues threonine 110–asparagine 119. Over residues proline 120–asparagine 136 the composition is skewed to polar residues. The chain crosses the membrane as a helical span at residues proline 230–leucine 250. The Extracellular segment spans residues threonine 251–alanine 2731. Positions serine 321–proline 387 are disordered. Over residues serine 322–alanine 370 the composition is skewed to low complexity. EGF-like domains lie at glycine 536–serine 572, arginine 574–glutamate 606, aspartate 643–serine 676, and threonine 738–glycine 774. Disulfide bonds link cysteine 540-cysteine 549, cysteine 545-cysteine 560, cysteine 562-cysteine 571, cysteine 578-cysteine 589, cysteine 583-cysteine 594, cysteine 596-cysteine 605, cysteine 651-cysteine 664, cysteine 666-cysteine 675, cysteine 742-cysteine 752, cysteine 746-cysteine 762, and cysteine 764-cysteine 773. An N-linked (GlcNAc...) asparagine glycan is attached at asparagine 857. 4 NHL repeats span residues glutamate 1160–aspartate 1201, glycine 1202–threonine 1246, serine 1391–isoleucine 1434, and cysteine 1459–serine 1502. The YD repeat unit spans residues threonine 1618 to valine 1652. The segment at leucine 2691 to alanine 2731 is disordered. Over residues alanine 2704–leucine 2724 the composition is skewed to basic residues.

The protein belongs to the tenascin family. Teneurin subfamily. As to quaternary structure, homodimer. Heterodimer with Ten-a. Interacts with Ten-a; the interaction occurs at the neuromuscular junction. Interacts with alpha-Spec and cher. In terms of processing, phosphorylated. Phosphorylation occurs at tyrosine residues. Proteolytically cleaved. As to expression, expressed in muscles and motor neurons (at protein level).

It localises to the cytoplasm. Its subcellular location is the postsynaptic cell membrane. It is found in the synapse. The protein resides in the synaptosome. The protein localises to the membrane. Its function is as follows. Involved in neural development, regulating the establishment of proper connectivity within the nervous system. Acts as a homophilic and heterophilic synaptic cell adhesion molecule that drives synapse assembly. Promotes bi-directional trans-synaptic signaling with Ten-a to organize neuromuscular synapses. Functions in olfactory synaptic partner matching by promoting homophilic cell adhesion between pre-synaptic olfactory receptor neurons (ORN) axons and post-synaptic projection neurons (PN) dendrites partner in the developing antennal lobe to form stable connections. Also required for peripheral axon growth cone guidance and target recognition of motor neurons. The chain is Teneurin-m (Ten-m) from Drosophila melanogaster (Fruit fly).